The chain runs to 146 residues: Catabolic 3-dehydroquinase (146 aa).

Tyr-24 acts as the Proton acceptor in catalysis. Substrate contacts are provided by Asn-78, His-84, and Asp-91. His-104 (proton donor) is an active-site residue. Residues Ile-105–Thr-106 and Arg-115 contribute to the substrate site.

This sequence belongs to the type-II 3-dehydroquinase family. As to quaternary structure, homododecamer. Adopts a ring-like structure, composed of an arrangement of two hexameric rings stacked on top of one another.

It carries out the reaction 3-dehydroquinate = 3-dehydroshikimate + H2O. It participates in aromatic compound metabolism; 3,4-dihydroxybenzoate biosynthesis; 3,4-dihydroxybenzoate from 3-dehydroquinate: step 1/2. In terms of biological role, is involved in the catabolism of quinate. Allows the utilization of quinate as carbon source via the beta-ketoadipate pathway. This chain is Catabolic 3-dehydroquinase, found in Candida albicans (strain SC5314 / ATCC MYA-2876) (Yeast).